Reading from the N-terminus, the 654-residue chain is Protein fem-1 homolog A-like (654 aa).

7 ANK repeats span residues 2–31 (DLHTAVYNAAHDGKLPLLQKLLASRGREEL), 40–70 (GGGTPLLIAARRGHLDVVEYLVDHCGASVEA), 82–111 (EGAPPLWAASAAGHLAVVRSLLHRGASVNR), 115–145 (TNSTPLRAACFNGHLDVVRCLVGEHKADLEV), 149–178 (HGHTCLMISCYKGHREIARYLLERGAQVNR), 182–211 (KGNTALHDCAESGSLEILQLLLSCHARMER), and 214–243 (YGMTPLLAASITGHTNIVEYLIQEQPSHEQ). Serine 108 bears the Phosphoserine mark. Positions 241–265 (HEQLSGTELPGEGSSQMAGNHCSTP) are disordered. Over residues 253 to 263 (GSSQMAGNHCS) the composition is skewed to polar residues. TPR repeat units lie at residues 283 to 317 (VEALELLGATYVDKKRDLLGALKHWRRAMELRHQG) and 375 to 408 (SYYIRYRGAVYADSGNFERCIRLWKYALDMQQNN). ANK repeat units lie at residues 519 to 561 (NGFT…DPDS) and 565 to 594 (DNNSPLHIAAQNNCPAIMDALIEAGAHMDA). A Phosphoserine modification is found at serine 608.

The protein belongs to the fem-1 family. Component of a CRL2 E3 ubiquitin-protein ligase complex, also named ECS (Elongin BC-CUL2/5-SOCS-box protein) complex, composed of CUL2, Elongin BC (ELOB and ELOC), RBX1 and substrate-specific adapter FEM1A.

It localises to the mitochondrion. The protein resides in the cytoplasm. It functions in the pathway protein modification; protein ubiquitination. Functionally, substrate-recognition component of a Cul2-RING (CRL2) E3 ubiquitin-protein ligase complex of the DesCEND (destruction via C-end degrons) pathway, which recognizes a C-degron located at the extreme C terminus of target proteins, leading to their ubiquitination and degradation. The C-degron recognized by the DesCEND pathway is usually a motif of less than ten residues and can be present in full-length proteins, truncated proteins or proteolytically cleaved forms. The CRL2(FEM1A) complex specifically recognizes proteins with an arginine at the C-terminus: recognizes and binds proteins ending with -Lys/Arg-Xaa-Arg and -Lys/Arg-Xaa-Xaa-Arg C-degrons, such as SIL1 or OR51B2, leading to their ubiquitination and degradation. The protein is Protein fem-1 homolog A-like of Mus musculus (Mouse).